Consider the following 357-residue polypeptide: Chorismate synthase (357 aa).

Basic and acidic residues predominate over residues 38–49 (EKDIQPDLDRRK). The tract at residues 38–60 (EKDIQPDLDRRKPGTSRYTTPRR) is disordered. The NADP(+) site is built by Arg-48 and Arg-54. FMN-binding positions include 125–127 (RSS), 243–244 (NA), Gly-283, 298–302 (KPTSS), and Arg-324.

It belongs to the chorismate synthase family. In terms of assembly, homotetramer. FMNH2 serves as cofactor.

It catalyses the reaction 5-O-(1-carboxyvinyl)-3-phosphoshikimate = chorismate + phosphate. It functions in the pathway metabolic intermediate biosynthesis; chorismate biosynthesis; chorismate from D-erythrose 4-phosphate and phosphoenolpyruvate: step 7/7. Catalyzes the anti-1,4-elimination of the C-3 phosphate and the C-6 proR hydrogen from 5-enolpyruvylshikimate-3-phosphate (EPSP) to yield chorismate, which is the branch point compound that serves as the starting substrate for the three terminal pathways of aromatic amino acid biosynthesis. This reaction introduces a second double bond into the aromatic ring system. The polypeptide is Chorismate synthase (Haemophilus influenzae (strain PittEE)).